We begin with the raw amino-acid sequence, 438 residues long: Aflatoxin cluster transcriptional coactivator aflS (438 aa).

The region spanning Leu-65–Val-134 is the HTH iclR-type domain. Positions Phe-95–Arg-114 form a DNA-binding region, H-T-H motif.

As to quaternary structure, interacts with aflR.

It localises to the nucleus. The protein localises to the endosome. Its function is as follows. Transcription coactivator involved in regulation of the aflatoxin biosynthesis gene cluster with aflR. The ratio of the expression data between aflS:aflR plays a crucial role in the regulation of aflatoxins production. A high ratio, produced at a range between 17 and 30 degrees Celsius, corresponds with the production profile of aflatoxin G1 biosynthesis. A low ratio, produced over 30 degrees Celsius, is related to aflatoxin B1 biosynthesis. AflJ may act in aflR transport to or from the nucleus, thus controlling the availability of aflR for transcriptional activation of aflatoxin biosynthesis cluster genes. AflJ may also assist in directing endosomes to the cytoplasmic membrane for aflatoxin export. In Aspergillus parasiticus (strain ATCC 56775 / NRRL 5862 / SRRC 143 / SU-1), this protein is Aflatoxin cluster transcriptional coactivator aflS.